A 460-amino-acid chain; its full sequence is 2-methylcitrate synthase, mitochondrial (460 aa).

Residues Met1–Ala24 constitute a mitochondrion transit peptide. CoA contacts are provided by Arg69 and Lys187. His264 is an oxaloacetate binding site. Leu299 is a binding site for CoA. His300 is a catalytic residue. The CoA site is built by Val341, Gly343, and Tyr344. Residues His346 and Arg355 each contribute to the oxaloacetate site. His346 is a catalytic residue. Residues Thr395, Lys396, and Asn401 each coordinate CoA. Asp403 is an active-site residue. Residues Arg429 and Arg449 each coordinate oxaloacetate.

This sequence belongs to the citrate synthase family. As to quaternary structure, homodimer.

Its subcellular location is the mitochondrion matrix. The enzyme catalyses propanoyl-CoA + oxaloacetate + H2O = (2S,3S)-2-methylcitrate + CoA + H(+). It carries out the reaction oxaloacetate + acetyl-CoA + H2O = citrate + CoA + H(+). Its pathway is organic acid metabolism; propanoate degradation. With respect to regulation, partially inhibited by ATP. Catalyzes the synthesis of (2S,3S)-2-methylcitrate from propionyl-CoA and oxaloacetate and also from acetyl-CoA and oxaloacetate with a greater efficiency. Also has citrate synthase activity and can substitute for the loss of citA activity. The polypeptide is 2-methylcitrate synthase, mitochondrial (Emericella nidulans (strain FGSC A4 / ATCC 38163 / CBS 112.46 / NRRL 194 / M139) (Aspergillus nidulans)).